The chain runs to 321 residues: Tetraacyldisaccharide 4'-kinase (321 aa).

54 to 61 is an ATP binding site; sequence SVGGTGKT.

This sequence belongs to the LpxK family.

It carries out the reaction a lipid A disaccharide + ATP = a lipid IVA + ADP + H(+). It functions in the pathway glycolipid biosynthesis; lipid IV(A) biosynthesis; lipid IV(A) from (3R)-3-hydroxytetradecanoyl-[acyl-carrier-protein] and UDP-N-acetyl-alpha-D-glucosamine: step 6/6. Its function is as follows. Transfers the gamma-phosphate of ATP to the 4'-position of a tetraacyldisaccharide 1-phosphate intermediate (termed DS-1-P) to form tetraacyldisaccharide 1,4'-bis-phosphate (lipid IVA). This chain is Tetraacyldisaccharide 4'-kinase, found in Rickettsia bellii (strain OSU 85-389).